The chain runs to 140 residues: Ribosome-binding factor A (140 aa).

Belongs to the RbfA family. In terms of assembly, monomer. Binds 30S ribosomal subunits, but not 50S ribosomal subunits or 70S ribosomes.

It localises to the cytoplasm. Its function is as follows. One of several proteins that assist in the late maturation steps of the functional core of the 30S ribosomal subunit. Associates with free 30S ribosomal subunits (but not with 30S subunits that are part of 70S ribosomes or polysomes). Required for efficient processing of 16S rRNA. May interact with the 5'-terminal helix region of 16S rRNA. This chain is Ribosome-binding factor A, found in Cereibacter sphaeroides (strain ATCC 17025 / ATH 2.4.3) (Rhodobacter sphaeroides).